A 291-amino-acid polypeptide reads, in one-letter code: ATP synthase gamma chain (291 aa).

The protein belongs to the ATPase gamma chain family. In terms of assembly, F-type ATPases have 2 components, CF(1) - the catalytic core - and CF(0) - the membrane proton channel. CF(1) has five subunits: alpha(3), beta(3), gamma(1), delta(1), epsilon(1). CF(0) has three main subunits: a, b and c.

It is found in the cell inner membrane. Functionally, produces ATP from ADP in the presence of a proton gradient across the membrane. The gamma chain is believed to be important in regulating ATPase activity and the flow of protons through the CF(0) complex. In Cupriavidus pinatubonensis (strain JMP 134 / LMG 1197) (Cupriavidus necator (strain JMP 134)), this protein is ATP synthase gamma chain.